Reading from the N-terminus, the 146-residue chain is Hemoglobin subunit beta (146 aa).

The Globin domain occupies 2–146 (QWTAEEKQLI…VAHALARKYH (145 aa)). Heme b is bound by residues His63 and His92.

This sequence belongs to the globin family. Heterotetramer of two alpha chains and two beta chains. As to expression, red blood cells.

In terms of biological role, involved in oxygen transport from the lung to the various peripheral tissues. This chain is Hemoglobin subunit beta (HBB), found in Rhea americana (Greater rhea).